A 460-amino-acid chain; its full sequence is Argininosuccinate lyase (460 aa).

The protein belongs to the lyase 1 family. Argininosuccinate lyase subfamily.

It localises to the cytoplasm. It catalyses the reaction 2-(N(omega)-L-arginino)succinate = fumarate + L-arginine. It functions in the pathway amino-acid biosynthesis; L-arginine biosynthesis; L-arginine from L-ornithine and carbamoyl phosphate: step 3/3. The sequence is that of Argininosuccinate lyase from Edwardsiella ictaluri (strain 93-146).